A 258-amino-acid chain; its full sequence is Indole-3-glycerol phosphate synthase (258 aa).

This sequence belongs to the TrpC family.

It catalyses the reaction 1-(2-carboxyphenylamino)-1-deoxy-D-ribulose 5-phosphate + H(+) = (1S,2R)-1-C-(indol-3-yl)glycerol 3-phosphate + CO2 + H2O. Its pathway is amino-acid biosynthesis; L-tryptophan biosynthesis; L-tryptophan from chorismate: step 4/5. This is Indole-3-glycerol phosphate synthase from Legionella pneumophila (strain Paris).